The primary structure comprises 461 residues: Cysteine--tRNA ligase (461 aa).

Position 30 (C30) interacts with Zn(2+). The short motif at 32-42 (VTIYDLCHIGH) is the 'HIGH' region element. Residues C211, H236, and E240 each contribute to the Zn(2+) site. The short motif at 268 to 272 (KMSKS) is the 'KMSKS' region element. K271 is an ATP binding site.

Belongs to the class-I aminoacyl-tRNA synthetase family. Monomer. Zn(2+) serves as cofactor.

The protein localises to the cytoplasm. The enzyme catalyses tRNA(Cys) + L-cysteine + ATP = L-cysteinyl-tRNA(Cys) + AMP + diphosphate. The sequence is that of Cysteine--tRNA ligase from Shewanella sp. (strain W3-18-1).